A 612-amino-acid chain; its full sequence is Protein NorD (612 aa).

Positions 220–246 (EGEGDLETPPSGQSRQRNGARRVDDSS) are disordered. Residues 420–609 (DLACLLLADL…FPPAAAVQAT (190 aa)) enclose the VWFA domain.

Its function is as follows. Component of the anaerobic respiratory chain that transforms nitrate to dinitrogen (denitrification). The chain is Protein NorD (norD) from Stutzerimonas stutzeri (Pseudomonas stutzeri).